An 89-amino-acid chain; its full sequence is Small ribosomal subunit protein uS15 (89 aa).

It belongs to the universal ribosomal protein uS15 family. In terms of assembly, part of the 30S ribosomal subunit. Forms a bridge to the 50S subunit in the 70S ribosome, contacting the 23S rRNA.

One of the primary rRNA binding proteins, it binds directly to 16S rRNA where it helps nucleate assembly of the platform of the 30S subunit by binding and bridging several RNA helices of the 16S rRNA. Functionally, forms an intersubunit bridge (bridge B4) with the 23S rRNA of the 50S subunit in the ribosome. This chain is Small ribosomal subunit protein uS15, found in Yersinia pseudotuberculosis serotype O:1b (strain IP 31758).